The sequence spans 828 residues: MSGSIRRSYTAMQNFPRFLLGVLFVATLSSCRPRLSEDEANWKGQTETSEVEEHLLLDPGNALRLFCDTNQSSSINWYREQERLLSGGKIRMVGTVLEVSDVTYEDSGLYICVVRGTGKILRRFSISVVDSLASGDEEEEEEDDDDEDGRREDTTADINEEPVYFFQAPYWTQPSRMDKKLHAVPAGNTVKFRCPAGGSPLPTIRWSLKNGREFRGEHRIGGIQIRHQHWSLVMESVVPSDRGNYTCVVENRVGSLTYTYFLDVLERSSHRPILQAGLPANTTARVGSDVEFYCKVYSDAQPHIQWLKHIEVNGSHFGPDDFPYVQVLKTADINPSDVEVLHLRNITMEDAGEYTCLAGNSIGLSHQSAWLTVLPNEDFLEQAEPAESRYMDIIIYTSGFLAVAMAIMIVILCRMQTPHSKQTLQTPTVHKLAKFPLIRQFSLESSSSGKSSAPLIRITRLSSSCAPMLPGVMEVELPLDAKWEFPRDRLVLGKPLGEGCFGQVVRAEGYGIEKDRPEKPVTVAVKMLKDNGTDKDLSDLISEMELMKVIGKHKNIINLLGVCTQEGPLFVIVEYASKGNLREFLRARRPPTPEDAFDITKVPEELLSFKDLVSCAYQVARGMEYLESKRCIHRDLAARNVLVAEDNVMKIADFGLARGVHDIDYYKKTSNGRLPVKWMAPEALFDRVYTHQSDIWSFGVLTWEIFTLGGSPYPVIPYEELFKLLREGHRMDKPSNCTHELYMLMRECWHAVPTQRPTFKQLEHLDRILTAVSEEYLDLSMPFEQYSPSCEDSASTCSSSDDSVFAPDPVPSSPCVFNYHNIHSQLGT.

An N-terminal signal peptide occupies residues M1 to C31. Over R32–D392 the chain is Extracellular. An Ig-like C2-type 1 domain is found at P33–S127. Residues C67 and C112 are joined by a disulfide bond. An N-linked (GlcNAc...) asparagine glycan is attached at N70. A disordered region spans residues L132–A156. The segment covering G135–E147 has biased composition (acidic residues). Ig-like C2-type domains lie at P169–T259 and P272–T372. C194 and C247 are oxidised to a cystine. N-linked (GlcNAc...) asparagine glycosylation is found at N244, N281, N313, and N345. Residues C294 and C356 are joined by a disulfide bond. The helical transmembrane segment at I393–C413 threads the bilayer. Topologically, residues R414–T828 are cytoplasmic. A Protein kinase domain is found at L490–L777. ATP is bound by residues L496 to V504 and K526. Residue D635 is the Proton acceptor of the active site. Phosphotyrosine; by autocatalysis occurs at positions 665, 666, and 776.

It belongs to the protein kinase superfamily. Tyr protein kinase family. Fibroblast growth factor receptor subfamily. Post-translationally, ubiquitinated. Subject to proteasomal degradation when not fully glycosylated. Autophosphorylated. Binding of FGF family members together with heparan sulfate proteoglycan or heparin promotes receptor dimerization and autophosphorylation on tyrosine residues. Autophosphorylation occurs in trans between the two FGFR molecules present in the dimer.

The protein resides in the cell membrane. The protein localises to the endosome. Its subcellular location is the endoplasmic reticulum. It carries out the reaction L-tyrosyl-[protein] + ATP = O-phospho-L-tyrosyl-[protein] + ADP + H(+). Present in an inactive conformation in the absence of bound ligand. Ligand binding leads to dimerization and activation by autophosphorylation on tyrosine residues. Functionally, tyrosine-protein kinase that acts as a cell-surface receptor for fibroblast growth factors and plays a role in the regulation of cell proliferation, differentiation and migration, and in regulation of lipid metabolism, bile acid biosynthesis, glucose uptake, vitamin D metabolism and phosphate homeostasis. Required for normal down-regulation of the expression of CYP7A1, the rate-limiting enzyme in bile acid synthesis, in response to FGF19. Phosphorylates PLCG1 and FRS2. Ligand binding leads to the activation of several signaling cascades. Activation of PLCG1 leads to the production of the cellular signaling molecules diacylglycerol and inositol 1,4,5-trisphosphate. Phosphorylation of FRS2 triggers recruitment of GRB2, GAB1, PIK3R1 and SOS1, and mediates activation of RAS, MAPK1/ERK2, MAPK3/ERK1 and the MAP kinase signaling pathway, as well as of the AKT1 signaling pathway. The protein is Fibroblast growth factor receptor 4 (fgfr4) of Xenopus laevis (African clawed frog).